The chain runs to 158 residues: Putative ribosomal RNA large subunit methyltransferase H (158 aa).

S-adenosyl-L-methionine-binding positions include L76, G107, and 126 to 131; that span reads LSRMTF.

The protein belongs to the RNA methyltransferase RlmH family.

Its subcellular location is the cytoplasm. The enzyme catalyses pseudouridine(1915) in 23S rRNA + S-adenosyl-L-methionine = N(3)-methylpseudouridine(1915) in 23S rRNA + S-adenosyl-L-homocysteine + H(+). Functionally, specifically methylates the pseudouridine at position 1915 (m3Psi1915) in 23S rRNA. This Methanocorpusculum labreanum (strain ATCC 43576 / DSM 4855 / Z) protein is Putative ribosomal RNA large subunit methyltransferase H.